We begin with the raw amino-acid sequence, 88 residues long: ATP synthase epsilon chain (88 aa).

The protein belongs to the ATPase epsilon chain family. In terms of assembly, F-type ATPases have 2 components, CF(1) - the catalytic core - and CF(0) - the membrane proton channel. CF(1) has five subunits: alpha(3), beta(3), gamma(1), delta(1), epsilon(1). CF(0) has three main subunits: a, b and c.

It is found in the cell inner membrane. Its function is as follows. Produces ATP from ADP in the presence of a proton gradient across the membrane. The sequence is that of ATP synthase epsilon chain (atpC) from Chlorobium limicola.